The chain runs to 394 residues: 8-amino-7-oxononanoate synthase (394 aa).

Substrate is bound at residue Arg18. Residue 105–106 (GY) participates in pyridoxal 5'-phosphate binding. His130 is a binding site for substrate. Pyridoxal 5'-phosphate contacts are provided by Ser175, His203, and Thr232. Lys235 carries the N6-(pyridoxal phosphate)lysine modification. Thr349 lines the substrate pocket.

Belongs to the class-II pyridoxal-phosphate-dependent aminotransferase family. BioF subfamily. In terms of assembly, homodimer. It depends on pyridoxal 5'-phosphate as a cofactor.

The catalysed reaction is 6-carboxyhexanoyl-[ACP] + L-alanine + H(+) = (8S)-8-amino-7-oxononanoate + holo-[ACP] + CO2. Its pathway is cofactor biosynthesis; biotin biosynthesis. Catalyzes the decarboxylative condensation of pimeloyl-[acyl-carrier protein] and L-alanine to produce 8-amino-7-oxononanoate (AON), [acyl-carrier protein], and carbon dioxide. This is 8-amino-7-oxononanoate synthase from Marinobacter nauticus (strain ATCC 700491 / DSM 11845 / VT8) (Marinobacter aquaeolei).